Here is a 548-residue protein sequence, read N- to C-terminus: 4-coumarate--CoA ligase CCL1 (548 aa).

Residues 195–203, 337–342, Asp-426, 438–441, and Lys-532 contribute to the ATP site; these read SSGTTGLPK, QGYGMT, and IVDR. An SBD1 region spans residues 268–337; it reads EISKLLELIE…EKLPHAKLGQ (70 aa). An SBD2 region spans residues 338-405; it reads GYGMTEAGPV…IRGKQIMKGY (68 aa).

This sequence belongs to the ATP-dependent AMP-binding enzyme family. Mostly expressed in glandular trichomes (lupulin glands) after flowering, and, to a lower extent, in stems, leaves, cones and flowers.

Its subcellular location is the cytoplasm. It carries out the reaction (E)-4-coumarate + ATP + CoA = (E)-4-coumaroyl-CoA + AMP + diphosphate. Its pathway is secondary metabolite biosynthesis. Involved in the biosynthesis of prenylated phenolics natural products which contribute to the bitter taste of beer and display broad biological activities. Catalyzes the ligation of CoA on (E)-4-coumarate to produce (E)-4-coumaroyl-CoA. The sequence is that of 4-coumarate--CoA ligase CCL1 from Humulus lupulus (European hop).